A 50-amino-acid chain; its full sequence is Large ribosomal subunit protein eL39 (50 aa).

It belongs to the eukaryotic ribosomal protein eL39 family.

This chain is Large ribosomal subunit protein eL39 (rpl39e), found in Archaeoglobus fulgidus (strain ATCC 49558 / DSM 4304 / JCM 9628 / NBRC 100126 / VC-16).